The following is a 279-amino-acid chain: 3-methyl-2-oxobutanoate hydroxymethyltransferase (279 aa).

Positions 43 and 82 each coordinate Mg(2+). Residues 43-44, Asp82, and Lys112 contribute to the 3-methyl-2-oxobutanoate site; that span reads DS. Position 114 (Glu114) interacts with Mg(2+). Glu181 (proton acceptor) is an active-site residue.

This sequence belongs to the PanB family. Homodecamer; pentamer of dimers. The cofactor is Mg(2+).

The protein resides in the cytoplasm. It carries out the reaction 3-methyl-2-oxobutanoate + (6R)-5,10-methylene-5,6,7,8-tetrahydrofolate + H2O = 2-dehydropantoate + (6S)-5,6,7,8-tetrahydrofolate. It functions in the pathway cofactor biosynthesis; (R)-pantothenate biosynthesis; (R)-pantoate from 3-methyl-2-oxobutanoate: step 1/2. Its function is as follows. Catalyzes the reversible reaction in which hydroxymethyl group from 5,10-methylenetetrahydrofolate is transferred onto alpha-ketoisovalerate to form ketopantoate. The protein is 3-methyl-2-oxobutanoate hydroxymethyltransferase of Geobacillus sp. (strain WCH70).